A 230-amino-acid chain; its full sequence is Probable methylthioribulose-1-phosphate dehydratase (230 aa).

A substrate-binding site is contributed by Cys87. Zn(2+) is bound by residues His105 and His107. Residue Glu129 is the Proton donor/acceptor of the active site. His185 serves as a coordination point for Zn(2+).

This sequence belongs to the aldolase class II family. MtnB subfamily. The cofactor is Zn(2+).

Its subcellular location is the cytoplasm. It catalyses the reaction 5-(methylsulfanyl)-D-ribulose 1-phosphate = 5-methylsulfanyl-2,3-dioxopentyl phosphate + H2O. The protein operates within amino-acid biosynthesis; L-methionine biosynthesis via salvage pathway; L-methionine from S-methyl-5-thio-alpha-D-ribose 1-phosphate: step 2/6. Functionally, catalyzes the dehydration of methylthioribulose-1-phosphate (MTRu-1-P) into 2,3-diketo-5-methylthiopentyl-1-phosphate (DK-MTP-1-P). The protein is Probable methylthioribulose-1-phosphate dehydratase of Drosophila grimshawi (Hawaiian fruit fly).